A 422-amino-acid chain; its full sequence is O-methyltransferase kk1A (422 aa).

S-adenosyl-L-methionine is bound at residue Asp-277. The active-site Proton acceptor is His-320.

Belongs to the class I-like SAM-binding methyltransferase superfamily. Cation-independent O-methyltransferase family.

Its pathway is secondary metabolite biosynthesis. Functionally, O-methyltransferase; part of the gene cluster that mediates the biosynthesis of KK-1, a novel cyclic depsipeptide with 10 residues which is a promising active compound with high activity against many plant pathogens, especially Botrytis cinerea. Within the pathway, kk1A is responsible for the O-methylation of tyrosine as a free amino acid before its activation as an aminoacyl-AMP by the corresponding A domain of kk1B. The nonribosomal peptide synthetase (NRPS) kk1B catalyzes the elongation and cyclization of the decapeptide chain composed of 1 D-lactic acid residue (D-Lac), 1 pipecolic acid residue (Pip), 1 aspartic acid residue (Asp), 1 isoleucine residue (Ile), 1 glycine residue (Gly), 1 tyrosine residue (Tyr) and 4 valine residues (Val). The Asp, Ile and 3 Val residues are N-methylated by the 5 methyltransferase domains from the NRPS (found in modules 3, 5, 6, 7 and 9), whereas the Tyr residue is O-methylated by the cluster encoded O-methyltransferase kk1A. The thioesterase kk1J is likely to be involved in the corrective mechanism of peptide chain synthesis. The D-lactate dehydrogenase kk1H is involved in the synthesis of D-lactic acid from pyruvic acid, which is recognized by the A domain of the first kk1B module. The pyrroline-5-carboxylate reductase kk1I is involved in the synthesis of the L-pipecolic acid residue of KK-1 from delta-1-pyrroline-5-carboxylate (P5C), a metabolic intermediate of lysine. It is still unclear how kk1C and kk1D are involved in the production of KK-1. The sequence is that of O-methyltransferase kk1A from Curvularia clavata.